Reading from the N-terminus, the 469-residue chain is Ribulose bisphosphate carboxylase large chain (469 aa).

A propeptide spanning residues Met1–Ser2 is cleaved from the precursor. Position 3 is an N-acetylproline (Pro3). Lys14 bears the N6,N6,N6-trimethyllysine mark. Residues Asn123 and Thr173 each coordinate substrate. Lys175 functions as the Proton acceptor in the catalytic mechanism. Position 177 (Lys177) interacts with substrate. Lys201, Asp203, and Glu204 together coordinate Mg(2+). Lys201 carries the N6-carboxylysine modification. The active-site Proton acceptor is the His294. Arg295, His327, and Ser379 together coordinate substrate.

It belongs to the RuBisCO large chain family. Type I subfamily. In terms of assembly, heterohexadecamer of 8 large chains and 8 small chains; disulfide-linked. The disulfide link is formed within the large subunit homodimers. Mg(2+) serves as cofactor. In terms of processing, the disulfide bond which can form in the large chain dimeric partners within the hexadecamer appears to be associated with oxidative stress and protein turnover.

The protein resides in the plastid. It localises to the chloroplast. It catalyses the reaction 2 (2R)-3-phosphoglycerate + 2 H(+) = D-ribulose 1,5-bisphosphate + CO2 + H2O. It carries out the reaction D-ribulose 1,5-bisphosphate + O2 = 2-phosphoglycolate + (2R)-3-phosphoglycerate + 2 H(+). Functionally, ruBisCO catalyzes two reactions: the carboxylation of D-ribulose 1,5-bisphosphate, the primary event in carbon dioxide fixation, as well as the oxidative fragmentation of the pentose substrate in the photorespiration process. Both reactions occur simultaneously and in competition at the same active site. This chain is Ribulose bisphosphate carboxylase large chain, found in Atriplex patula (Common orache).